Reading from the N-terminus, the 169-residue chain is S-ribosylhomocysteine lyase (169 aa).

Residues His54, His58, and Cys128 each contribute to the Fe cation site.

It belongs to the LuxS family. Homodimer. Fe cation serves as cofactor.

The enzyme catalyses S-(5-deoxy-D-ribos-5-yl)-L-homocysteine = (S)-4,5-dihydroxypentane-2,3-dione + L-homocysteine. In terms of biological role, involved in the synthesis of autoinducer 2 (AI-2) which is secreted by bacteria and is used to communicate both the cell density and the metabolic potential of the environment. The regulation of gene expression in response to changes in cell density is called quorum sensing. Catalyzes the transformation of S-ribosylhomocysteine (RHC) to homocysteine (HC) and 4,5-dihydroxy-2,3-pentadione (DPD). The chain is S-ribosylhomocysteine lyase from Shewanella amazonensis (strain ATCC BAA-1098 / SB2B).